Here is a 594-residue protein sequence, read N- to C-terminus: Type I restriction enzyme EcoEI specificity subunit (594 aa).

Belongs to the type-I restriction system S methylase family. As to quaternary structure, the type I restriction/modification system is composed of three polypeptides R, M and S; the restriction enzyme has stoichiometry R(2)M(2)S(1) while the methyltransferase is M(2)S(1).

The specificity (S) subunit of a type I restriction enzyme; this subunit dictates DNA sequence specificity. The M and S subunits together form a methyltransferase (MTase) that methylates two adenine residues of the sequence 5'-GAGN(7)ATGC-3'. In the presence of the R subunit the complex can also act as an endonuclease, binding to the same target sequence but cutting the DNA some distance from this site. Whether the DNA is cut or modified depends on the methylation state of the target sequence. When the target site is unmodified, the DNA is cut. When the target site is hemimethylated, the complex acts as a maintenance MTase modifying the DNA so that both strands become methylated. After locating a non-methylated recognition site, the enzyme complex serves as a molecular motor that translocates DNA in an ATP-dependent manner until a collision occurs that triggers cleavage. This Escherichia coli protein is Type I restriction enzyme EcoEI specificity subunit.